The following is a 341-amino-acid chain: Galactofuranose transporter permease protein YtfT (341 aa).

Residues 1 to 25 (MMPQSLPDTTTPKRRFRWPTGMPQL) are Cytoplasmic-facing. Residues 26 to 46 (VALLLVLLVDSLVAPHFWQVV) traverse the membrane as a helical segment. At 47 to 65 (LQDGRLFGSPIDILNRAAP) the chain is on the periplasmic side. 2 consecutive transmembrane segments (helical) span residues 66–86 (VALL…DLSV) and 87–107 (GAVM…GFSL). Residue Pro-108 is a topological domain, periplasmic. Residues 109–129 (IVLLSALGTGILAGLWNGILV) form a helical membrane-spanning segment. Topologically, residues 130–136 (AILKIQP) are cytoplasmic. A helical transmembrane segment spans residues 137–157 (FVATLILMVAGRGVAQLITAG). The Periplasmic segment spans residues 158 to 174 (QIVTFNSPDLSWFGSGS). A helical membrane pass occupies residues 175-195 (LLFLPTPVIIAVLTLILFWLL). At 196–223 (TRKTALGMFIEAVGINIRAAKNAGVNTR) the chain is on the cytoplasmic side. A helical membrane pass occupies residues 224 to 244 (IIVMLTYVLSGLCAAIAGIIV). Topologically, residues 245 to 255 (AADIRGADANN) are periplasmic. Residues 256–276 (AGLWLELDAILAVVIGGGSLM) form a helical membrane-spanning segment. Over 277–281 (GGRFN) the chain is Cytoplasmic. Helical transmembrane passes span 282–302 (LLLS…ILLS) and 303–323 (GFPP…VLIV). At 324–341 (QSQRFISLIKGVRSRDKT) the chain is on the cytoplasmic side.

It belongs to the binding-protein-dependent transport system permease family. AraH/RbsC subfamily. As to quaternary structure, the complex is composed of two ATP-binding proteins (YtfR), two transmembrane proteins (YtfT and YjfF) and a solute-binding protein (YtfQ).

It localises to the cell inner membrane. In terms of biological role, part of the ABC transporter complex YtfQRT-YjfF involved in galactofuranose transport. Probably responsible for the translocation of the substrate across the membrane. The chain is Galactofuranose transporter permease protein YtfT (ytfT) from Escherichia coli (strain K12).